The chain runs to 188 residues: Elongation factor P (188 aa).

The disordered stretch occupies residues 139 to 163 (PVTKGQTASSSYKPATLSNGVRTQV). Residues 142–160 (KGQTASSSYKPATLSNGVR) show a composition bias toward polar residues.

Belongs to the elongation factor P family.

The protein localises to the cytoplasm. It participates in protein biosynthesis; polypeptide chain elongation. Involved in peptide bond synthesis. Stimulates efficient translation and peptide-bond synthesis on native or reconstituted 70S ribosomes in vitro. Probably functions indirectly by altering the affinity of the ribosome for aminoacyl-tRNA, thus increasing their reactivity as acceptors for peptidyl transferase. This chain is Elongation factor P, found in Methylobacterium nodulans (strain LMG 21967 / CNCM I-2342 / ORS 2060).